A 123-amino-acid chain; its full sequence is Ribosome-binding factor A (123 aa).

This sequence belongs to the RbfA family. Monomer. Binds 30S ribosomal subunits, but not 50S ribosomal subunits or 70S ribosomes.

The protein localises to the cytoplasm. Functionally, one of several proteins that assist in the late maturation steps of the functional core of the 30S ribosomal subunit. Associates with free 30S ribosomal subunits (but not with 30S subunits that are part of 70S ribosomes or polysomes). Required for efficient processing of 16S rRNA. May interact with the 5'-terminal helix region of 16S rRNA. The sequence is that of Ribosome-binding factor A from Magnetococcus marinus (strain ATCC BAA-1437 / JCM 17883 / MC-1).